Consider the following 414-residue polypeptide: Serine hydroxymethyltransferase (414 aa).

(6S)-5,6,7,8-tetrahydrofolate is bound by residues Leu-118 and 122-124 (GHL). Residue Lys-226 is modified to N6-(pyridoxal phosphate)lysine. 353-355 (SPF) contacts (6S)-5,6,7,8-tetrahydrofolate.

It belongs to the SHMT family. In terms of assembly, homodimer. The cofactor is pyridoxal 5'-phosphate.

Its subcellular location is the cytoplasm. It catalyses the reaction (6R)-5,10-methylene-5,6,7,8-tetrahydrofolate + glycine + H2O = (6S)-5,6,7,8-tetrahydrofolate + L-serine. It functions in the pathway one-carbon metabolism; tetrahydrofolate interconversion. The protein operates within amino-acid biosynthesis; glycine biosynthesis; glycine from L-serine: step 1/1. Its function is as follows. Catalyzes the reversible interconversion of serine and glycine with tetrahydrofolate (THF) serving as the one-carbon carrier. This reaction serves as the major source of one-carbon groups required for the biosynthesis of purines, thymidylate, methionine, and other important biomolecules. Also exhibits THF-independent aldolase activity toward beta-hydroxyamino acids, producing glycine and aldehydes, via a retro-aldol mechanism. This Blochmanniella floridana protein is Serine hydroxymethyltransferase.